Consider the following 688-residue polypeptide: Glycine--tRNA ligase beta subunit (688 aa).

Belongs to the class-II aminoacyl-tRNA synthetase family. In terms of assembly, tetramer of two alpha and two beta subunits.

It is found in the cytoplasm. The enzyme catalyses tRNA(Gly) + glycine + ATP = glycyl-tRNA(Gly) + AMP + diphosphate. This chain is Glycine--tRNA ligase beta subunit, found in Chromohalobacter salexigens (strain ATCC BAA-138 / DSM 3043 / CIP 106854 / NCIMB 13768 / 1H11).